The sequence spans 508 residues: Mitochondrial distribution and morphology protein 10 (508 aa).

The disordered stretch occupies residues 160–195 (PAHPTSTRPTPPQTPPSHTRQPSEPSTPAPSPTPGN).

This sequence belongs to the MDM10 family. Component of the ER-mitochondria encounter structure (ERMES) or MDM complex, composed of MMM1, MDM10, MDM12 and MDM34. Associates with the mitochondrial outer membrane sorting assembly machinery SAM(core) complex.

It localises to the mitochondrion outer membrane. In terms of biological role, component of the ERMES/MDM complex, which serves as a molecular tether to connect the endoplasmic reticulum and mitochondria. Components of this complex are involved in the control of mitochondrial shape and protein biogenesis and may function in phospholipid exchange. MDM10 is involved in the late assembly steps of the general translocase of the mitochondrial outer membrane (TOM complex). Functions in the TOM40-specific route of the assembly of outer membrane beta-barrel proteins, including the association of TOM40 with the receptor TOM22 and small TOM proteins. Can associate with the SAM(core) complex as well as the MDM12-MMM1 complex, both involved in late steps of the major beta-barrel assembly pathway, that is responsible for biogenesis of all outer membrane beta-barrel proteins. May act as a switch that shuttles between both complexes and channels precursor proteins into the TOM40-specific pathway. Plays a role in mitochondrial morphology and in the inheritance of mitochondria. The polypeptide is Mitochondrial distribution and morphology protein 10 (Cryptococcus neoformans var. neoformans serotype D (strain B-3501A) (Filobasidiella neoformans)).